The primary structure comprises 168 residues: MVSLAEGFGFNTNILETNVLNLAVVLPIVFTLGRDTLTSMLDTRREKILGSLRSADDRFKQAQLELDTAKAELATANDKVKDIKSEGRKTLEALTAEQSSRMAEVATRFAGLKDETIRLEEEKAIAQFRKQLVNVAFEKAIVGIQSQMNASLHRKYIDAKISLMTSRL.

The helical transmembrane segment at 20–37 (LNLAVVLPIVFTLGRDTL) threads the bilayer.

This sequence belongs to the ATPase B chain family. As to quaternary structure, F-type ATPases have 2 components, F(1) - the catalytic core - and F(0) - the membrane proton channel. F(1) has five subunits: alpha(3), beta(3), gamma(1), delta(1), epsilon(1). F(0) has four main subunits: a(1), b(1), b'(1) and c(10-14). The alpha and beta chains form an alternating ring which encloses part of the gamma chain. F(1) is attached to F(0) by a central stalk formed by the gamma and epsilon chains, while a peripheral stalk is formed by the delta, b and b' chains.

The protein resides in the plastid. The protein localises to the chloroplast thylakoid membrane. In terms of biological role, f(1)F(0) ATP synthase produces ATP from ADP in the presence of a proton or sodium gradient. F-type ATPases consist of two structural domains, F(1) containing the extramembraneous catalytic core and F(0) containing the membrane proton channel, linked together by a central stalk and a peripheral stalk. During catalysis, ATP synthesis in the catalytic domain of F(1) is coupled via a rotary mechanism of the central stalk subunits to proton translocation. Component of the F(0) channel, it forms part of the peripheral stalk, linking F(1) to F(0). In Ostreococcus tauri, this protein is ATP synthase subunit b, chloroplastic.